Here is a 302-residue protein sequence, read N- to C-terminus: Oxygen-dependent coproporphyrinogen-III oxidase (302 aa).

A substrate-binding site is contributed by Ser-94. A divalent metal cation-binding residues include His-98 and His-108. His-108 (proton donor) is an active-site residue. 110–112 (NVR) serves as a coordination point for substrate. Positions 147 and 177 each coordinate a divalent metal cation. An important for dimerization region spans residues 242 to 277 (YVEFNLVYDRGTLFGLQTGGRTESILMSMPPLARWE). Position 260 to 262 (260 to 262 (GGR)) interacts with substrate.

It belongs to the aerobic coproporphyrinogen-III oxidase family. As to quaternary structure, homodimer. A divalent metal cation is required as a cofactor.

The protein localises to the cytoplasm. It catalyses the reaction coproporphyrinogen III + O2 + 2 H(+) = protoporphyrinogen IX + 2 CO2 + 2 H2O. The protein operates within porphyrin-containing compound metabolism; protoporphyrin-IX biosynthesis; protoporphyrinogen-IX from coproporphyrinogen-III (O2 route): step 1/1. Its function is as follows. Involved in the heme biosynthesis. Catalyzes the aerobic oxidative decarboxylation of propionate groups of rings A and B of coproporphyrinogen-III to yield the vinyl groups in protoporphyrinogen-IX. This chain is Oxygen-dependent coproporphyrinogen-III oxidase, found in Aeromonas salmonicida (strain A449).